The following is a 246-amino-acid chain: Adenylate kinase 4 (246 aa).

N-acetylalanine is present on alanine 2. Residue 43–48 participates in ATP binding; sequence GSGKGT. The segment at 63–92 is NMP; the sequence is STGDMLRAAVASKTPLGVKAKEAMEKGELV. Residues threonine 64, arginine 69, 90–92, 118–121, and glutamine 125 contribute to the AMP site; these read ELV and GFPR. The tract at residues 159–196 is LID; that stretch reads GRWIHPSSGRSYHTKFAPPKTPGVDDITGEPLIQRKDD. Arginine 160 serves as a coordination point for ATP. Positions 193 and 204 each coordinate AMP.

This sequence belongs to the adenylate kinase family. As to quaternary structure, monomer.

Its subcellular location is the cytoplasm. It catalyses the reaction AMP + ATP = 2 ADP. In terms of biological role, catalyzes the reversible transfer of the terminal phosphate group between ATP and AMP. Plays an important role in cellular energy homeostasis and in adenine nucleotide metabolism. In Arabidopsis thaliana (Mouse-ear cress), this protein is Adenylate kinase 4 (ADK1).